Here is a 110-residue protein sequence, read N- to C-terminus: Large ribosomal subunit protein uL22 (110 aa).

This sequence belongs to the universal ribosomal protein uL22 family. Part of the 50S ribosomal subunit.

Its function is as follows. This protein binds specifically to 23S rRNA; its binding is stimulated by other ribosomal proteins, e.g. L4, L17, and L20. It is important during the early stages of 50S assembly. It makes multiple contacts with different domains of the 23S rRNA in the assembled 50S subunit and ribosome. In terms of biological role, the globular domain of the protein is located near the polypeptide exit tunnel on the outside of the subunit, while an extended beta-hairpin is found that lines the wall of the exit tunnel in the center of the 70S ribosome. The sequence is that of Large ribosomal subunit protein uL22 from Glaesserella parasuis serovar 5 (strain SH0165) (Haemophilus parasuis).